The following is a 234-amino-acid chain: Putative ankyrin repeat protein RF_0063 (234 aa).

2 ANK repeats span residues 149–180 (NNNT…TISI) and 184–213 (YNNT…QKAL).

The protein is Putative ankyrin repeat protein RF_0063 of Rickettsia felis (strain ATCC VR-1525 / URRWXCal2) (Rickettsia azadi).